The primary structure comprises 692 residues: MPRTHKIEDYRNFGIMAHIDAGKTTTTERILYYTGKSHKIGEVHDGAATMDWMEQEQERGITITSAATTAFWNDKRLNIIDTPGHVDFTIEVERSLRVLDGAVTVLDGNAGVEPQTETVWRQADKYKVPRIVFVNKMDKIGADFDKSVESIRDRLGAKAVPIQFPIGSESNLKGLVDLVRMKAVVWDNDGLGASYRDEEIPADLMDKAVEARAYLVENAVELDDDAMEAYLGGEEPSIETIKKCIRKAVLTGAFYPILCGSAFKNKGVQPLLDAVVDYLPSPVDIPPTKGIDFKTEEETTRKASDEEPLSVLAFKIMDDPFVGSLTFCRIYSGKMETGMSLLNSTRDKRERVGRMLLMHSNNREDIKEAYAGDIVALAGLKETRTGDTLCDPLKSPVILERMEFPAPVIEIAVEPKSKADQEKLGVALQKLAAEDPSFTVSTDFESGQTILKGMGELHLDIKIDILKRTYKVEANIGAPQVAYRESLGRKVDIDYTHKKQTGGTGQFARVMITFEPGEPGSGFVFESAIVGGAVPKEYIPGVQKGLESVKDSGLLAGFPLIDFKATLTDGKYHDVDSSVLAFEIASRAAFKELREKGAPKLLEPIMKVEVVTPEEYLGSVIGDLNSRRGMIQGQDMRGNATVVNAYVPLANMFGYVNTLRGMSQGRAQFSMVYDHYDPVPQHVADEVIKKYA.

Residues 8 to 283 (EDYRNFGIMA…AVVDYLPSPV (276 aa)) enclose the tr-type G domain. GTP-binding positions include 17 to 24 (AHIDAGKT), 81 to 85 (DTPGH), and 135 to 138 (NKMD).

Belongs to the TRAFAC class translation factor GTPase superfamily. Classic translation factor GTPase family. EF-G/EF-2 subfamily.

The protein localises to the cytoplasm. Its function is as follows. Catalyzes the GTP-dependent ribosomal translocation step during translation elongation. During this step, the ribosome changes from the pre-translocational (PRE) to the post-translocational (POST) state as the newly formed A-site-bound peptidyl-tRNA and P-site-bound deacylated tRNA move to the P and E sites, respectively. Catalyzes the coordinated movement of the two tRNA molecules, the mRNA and conformational changes in the ribosome. This chain is Elongation factor G, found in Caulobacter vibrioides (strain ATCC 19089 / CIP 103742 / CB 15) (Caulobacter crescentus).